The primary structure comprises 253 residues: uncharacterized protein (253 aa).

Residues 200-209 (TGREHAHKGP) are compositionally biased toward basic and acidic residues. Disordered stretches follow at residues 200 to 225 (TGREHAHKGPELTTPDSGLPRPPNPA) and 234 to 253 (QHSPPLGTSTPSAVLLSAAT).

As to expression, most abundantly expressed in gastrointestinal tissues. Expressed at lower levels in kidney and placenta. Expressed in fetal brain, liver, placenta, kidney and lung.

This is an uncharacterized protein from Homo sapiens (Human).